A 230-amino-acid chain; its full sequence is Leucyl/phenylalanyl-tRNA--protein transferase (230 aa).

The protein belongs to the L/F-transferase family.

Its subcellular location is the cytoplasm. The enzyme catalyses N-terminal L-lysyl-[protein] + L-leucyl-tRNA(Leu) = N-terminal L-leucyl-L-lysyl-[protein] + tRNA(Leu) + H(+). The catalysed reaction is N-terminal L-arginyl-[protein] + L-leucyl-tRNA(Leu) = N-terminal L-leucyl-L-arginyl-[protein] + tRNA(Leu) + H(+). It catalyses the reaction L-phenylalanyl-tRNA(Phe) + an N-terminal L-alpha-aminoacyl-[protein] = an N-terminal L-phenylalanyl-L-alpha-aminoacyl-[protein] + tRNA(Phe). In terms of biological role, functions in the N-end rule pathway of protein degradation where it conjugates Leu, Phe and, less efficiently, Met from aminoacyl-tRNAs to the N-termini of proteins containing an N-terminal arginine or lysine. In Erwinia tasmaniensis (strain DSM 17950 / CFBP 7177 / CIP 109463 / NCPPB 4357 / Et1/99), this protein is Leucyl/phenylalanyl-tRNA--protein transferase.